The primary structure comprises 252 residues: Biosynthetic peptidoglycan transglycosylase (252 aa).

Residues 23–43 form a helical membrane-spanning segment; that stretch reads IGFLLGCIVAGVVAMQVYFFL.

Belongs to the glycosyltransferase 51 family.

It localises to the cell inner membrane. It carries out the reaction [GlcNAc-(1-&gt;4)-Mur2Ac(oyl-L-Ala-gamma-D-Glu-L-Lys-D-Ala-D-Ala)](n)-di-trans,octa-cis-undecaprenyl diphosphate + beta-D-GlcNAc-(1-&gt;4)-Mur2Ac(oyl-L-Ala-gamma-D-Glu-L-Lys-D-Ala-D-Ala)-di-trans,octa-cis-undecaprenyl diphosphate = [GlcNAc-(1-&gt;4)-Mur2Ac(oyl-L-Ala-gamma-D-Glu-L-Lys-D-Ala-D-Ala)](n+1)-di-trans,octa-cis-undecaprenyl diphosphate + di-trans,octa-cis-undecaprenyl diphosphate + H(+). It participates in cell wall biogenesis; peptidoglycan biosynthesis. In terms of biological role, peptidoglycan polymerase that catalyzes glycan chain elongation from lipid-linked precursors. This chain is Biosynthetic peptidoglycan transglycosylase, found in Cupriavidus pinatubonensis (strain JMP 134 / LMG 1197) (Cupriavidus necator (strain JMP 134)).